Here is a 51-residue protein sequence, read N- to C-terminus: Large ribosomal subunit protein bL33 (51 aa).

The protein belongs to the bacterial ribosomal protein bL33 family.

The protein is Large ribosomal subunit protein bL33 of Alkalilimnicola ehrlichii (strain ATCC BAA-1101 / DSM 17681 / MLHE-1).